The chain runs to 430 residues: MKLQKPKGTADLLPAETAKWQYIEEIARGVFNDYNFKEIRTPMFESYELFSRATGETSDIVTKEMYDFEDKGGRHIALRPEGTASAVRAYIENKLYAPEVVKPVKLWYDAPMFRYERPQSGRLRQFHQFGVECLGLKNSAVDVEIIAMADTLFRQLGISGVKLSLNTLGDMESRKAYRQALIDYLTPFENQLSEDSRRRLNENPLRVLDSKEAEDIAIVKNAPAILDYLNETSKAYFEEVKALLEALNIEYTIDSNMVRGLDYYNDTIFEFIVNFDGKELTVCGGGRYDGLVEYFDGPATPAFGFGLGIERLLMIAEKQEINFIPEETLDVYIAVMGEKANLEATKLAESLREQAFKVERDFSNRKLGAQFKTAEKLGAELIITLGEDEVRTGQIKVKHNQTRKQVETTLKAVHESFAPIFEEIYADEIN.

It belongs to the class-II aminoacyl-tRNA synthetase family. Homodimer.

It localises to the cytoplasm. The catalysed reaction is tRNA(His) + L-histidine + ATP = L-histidyl-tRNA(His) + AMP + diphosphate + H(+). This chain is Histidine--tRNA ligase, found in Lactococcus lactis subsp. cremoris (strain SK11).